A 235-amino-acid polypeptide reads, in one-letter code: Photosystem I assembly protein Ycf4 (235 aa).

A run of 2 helical transmembrane segments spans residues 21-43 (NLCW…TSSY) and 63-85 (GIVM…CTIL).

Belongs to the Ycf4 family.

It localises to the plastid. The protein resides in the chloroplast thylakoid membrane. Its function is as follows. Seems to be required for the assembly of the photosystem I complex. In Amborella trichopoda, this protein is Photosystem I assembly protein Ycf4.